The sequence spans 56 residues: Small ribosomal subunit protein uS14 (56 aa).

The Zn(2+) site is built by cysteine 21, cysteine 24, cysteine 39, and cysteine 42.

Belongs to the universal ribosomal protein uS14 family. Component of the 40S small ribosomal subunit. It depends on Zn(2+) as a cofactor.

It is found in the cytoplasm. The protein resides in the cytosol. The protein localises to the rough endoplasmic reticulum. In Spodoptera frugiperda (Fall armyworm), this protein is Small ribosomal subunit protein uS14 (RpS29).